Reading from the N-terminus, the 797-residue chain is Inactive dipeptidyl peptidase 10 (797 aa).

The tract at residues 1–28 (MKQEQQPTPGARATQSQPADQELGSNSP) is disordered. Topologically, residues 1–34 (MKQEQQPTPGARATQSQPADQELGSNSPPQRNWK) are cytoplasmic. The chain crosses the membrane as a helical; Signal-anchor for type II membrane protein span at residues 35–55 (GIAIALLVILVVCSLITMSVI). Residues 56 to 797 (LLTPDELTNS…VLPQEPEEDE (742 aa)) lie on the Extracellular side of the membrane. Asn64, Asn91, Asn112, and Asn120 each carry an N-linked (GlcNAc...) asparagine glycan. Phosphotyrosine is present on residues Tyr139 and Tyr144. N-linked (GlcNAc...) asparagine glycans are attached at residues Asn258, Asn343, Asn518, and Asn749.

It belongs to the peptidase S9B family. DPPIV subfamily. As to quaternary structure, may form oligomers. Interacts with KCND1 and KCND2. In terms of processing, N-glycosylation is important for cell surface expression, specially at Asn-258, which is crucial. As to expression, detected in brain cortex (at protein level). Expressed in the brain, predominantly by neurons and not by glia.

The protein resides in the cell membrane. Functionally, promotes cell surface expression of the potassium channel KCND2. Modulates the activity and gating characteristics of the potassium channel KCND2. Has no dipeptidyl aminopeptidase activity. The sequence is that of Inactive dipeptidyl peptidase 10 (Dpp10) from Mus musculus (Mouse).